Consider the following 212-residue polypeptide: MITIAKDLKVNEQIRVRQVRLIGAEGEQIGIIDTREAMNMAREKSLDLVMVSPQAVPPVCRLLDYGRFRYEQQQNEKENRKRARSQEVKAIKFRVKIDDNDFKTKTGHVRRFLNEGHKVKVTIMFRGRERTHPELGERILVRVAETLADVGAPEGNPSMMGMDMNMIMAPKAPASPKKDKADRPEGDAGDTDMAAPAPAPAAAPETESAPSA.

The segment at 168–212 (MAPKAPASPKKDKADRPEGDAGDTDMAAPAPAPAAAPETESAPSA) is disordered. A compositionally biased stretch (basic and acidic residues) spans 176 to 186 (PKKDKADRPEG). The span at 194-212 (AAPAPAPAAAPETESAPSA) shows a compositional bias: low complexity.

This sequence belongs to the IF-3 family. In terms of assembly, monomer.

The protein resides in the cytoplasm. In terms of biological role, IF-3 binds to the 30S ribosomal subunit and shifts the equilibrium between 70S ribosomes and their 50S and 30S subunits in favor of the free subunits, thus enhancing the availability of 30S subunits on which protein synthesis initiation begins. The chain is Translation initiation factor IF-3 from Deinococcus radiodurans (strain ATCC 13939 / DSM 20539 / JCM 16871 / CCUG 27074 / LMG 4051 / NBRC 15346 / NCIMB 9279 / VKM B-1422 / R1).